Here is a 31-residue protein sequence, read N- to C-terminus: Morintide mO3 (31 aa).

The Chitin-binding type-1 domain maps to 1–30 (NRLCCSQYGFCGTTSEYCSRANGCQSNCWG). Disulfide bonds link Cys-4–Cys-18 and Cys-24–Cys-28.

As to expression, seeds (at protein level).

Functionally, chitin-binding protein which functions in defense against chitin-containing fungal pathogens. The protein is Morintide mO3 of Moringa oleifera (Horseradish tree).